A 469-amino-acid polypeptide reads, in one-letter code: Cyclin-dependent kinase 14 (469 aa).

Residues S24, S78, and S95 each carry the phosphoserine modification. Residues 103–133 form a disordered region; sequence FKSSSAGKESPKVRRHSSPSSPTSPKFGKAD. At S134 the chain carries Phosphoserine. The region spanning 135–419 is the Protein kinase domain; it reads YEKLEKLGEG…AQAALSHEYF (285 aa). ATP contacts are provided by residues 141 to 149 and K164; that span reads LGEGSYATV. Residue D256 is the Proton acceptor of the active site. A disordered region spans residues 449–469; that stretch reads ESMRAFGKNNSYGKSLSNSKH. Residues 456 to 469 are compositionally biased toward polar residues; it reads KNNSYGKSLSNSKH.

The protein belongs to the protein kinase superfamily. CMGC Ser/Thr protein kinase family. CDC2/CDKX subfamily. Found in a complex with LRP6, CCNY and CAPRIN2 during G2/M stage; CAPRIN2 functions as a scaffold for the complex by binding to CCNY via its N terminus and to CDK14 via its C terminus. Interacts with CCNY; CCNY mediates its recruitment to the plasma membrane and promotes phosphorylation of LRP6. Interacts with CCDN3 and CDKN1A. Interacts with SEPT8. Interacts with 14-3-3 proteina YWHAB, YWHAE, YWHAH and YWHAQ. In the adult, widely expressed at low levels except in brain, kidney and testis where expression is high. In the brain, detected in cortex, hippocampus, dentate gyrus, amygdala cortex, parasubiculum and cerebellum. In the embryo, expressed predominantly in the nervous system.

The protein resides in the cell membrane. It is found in the cytoplasm. It localises to the nucleus. It catalyses the reaction L-seryl-[protein] + ATP = O-phospho-L-seryl-[protein] + ADP + H(+). It carries out the reaction L-threonyl-[protein] + ATP = O-phospho-L-threonyl-[protein] + ADP + H(+). Its activity is regulated as follows. Serine/threonine-protein kinase activity is promoted by associated cyclins CCDN3 and CCNY and repressed by CDKN1A. In terms of biological role, serine/threonine-protein kinase involved in the control of the eukaryotic cell cycle, whose activity is controlled by an associated cyclin. Acts as a cell-cycle regulator of Wnt signaling pathway during G2/M phase by mediating the phosphorylation of LRP6 at 'Ser-1490', leading to the activation of the Wnt signaling pathway. Acts as a regulator of cell cycle progression and cell proliferation via its interaction with CCDN3. Phosphorylates RB1 in vitro, however the relevance of such result remains to be confirmed in vivo. May also play a role in meiosis, neuron differentiation and may indirectly act as a negative regulator of insulin-responsive glucose transport. This is Cyclin-dependent kinase 14 (Cdk14) from Mus musculus (Mouse).